The chain runs to 303 residues: N-acetyl-D-glucosamine kinase (303 aa).

ATP is bound by residues 4-11 and 133-140; these read GFDIGGTK and GVGGGLVL. The Zn(2+) site is built by histidine 157, cysteine 177, cysteine 179, and cysteine 184.

Belongs to the ROK (NagC/XylR) family. NagK subfamily.

The enzyme catalyses N-acetyl-D-glucosamine + ATP = N-acetyl-D-glucosamine 6-phosphate + ADP + H(+). The protein operates within cell wall biogenesis; peptidoglycan recycling. Catalyzes the phosphorylation of N-acetyl-D-glucosamine (GlcNAc) derived from cell-wall degradation, yielding GlcNAc-6-P. This Salmonella paratyphi B (strain ATCC BAA-1250 / SPB7) protein is N-acetyl-D-glucosamine kinase.